The chain runs to 101 residues: Translation initiation factor IF-1, chloroplastic (101 aa).

Residues 1–10 (MNQLKKSFSP) show a composition bias toward polar residues. The tract at residues 1–35 (MNQLKKSFSPTEGKKDQNNLINDPQKNKQKKQKKL) is disordered. An S1-like domain is found at 26 to 101 (KNKQKKQKKL…TKGRITYRHR (76 aa)).

It belongs to the IF-1 family. Component of the 30S ribosomal translation pre-initiation complex which assembles on the 30S ribosome in the order IF-2 and IF-3, IF-1 and N-formylmethionyl-tRNA(fMet); mRNA recruitment can occur at any time during PIC assembly.

The protein localises to the plastid. Its subcellular location is the chloroplast. In terms of biological role, one of the essential components for the initiation of protein synthesis. Stabilizes the binding of IF-2 and IF-3 on the 30S subunit to which N-formylmethionyl-tRNA(fMet) subsequently binds. Helps modulate mRNA selection, yielding the 30S pre-initiation complex (PIC). Upon addition of the 50S ribosomal subunit IF-1, IF-2 and IF-3 are released leaving the mature 70S translation initiation complex. The sequence is that of Translation initiation factor IF-1, chloroplastic from Tetradesmus obliquus (Green alga).